The following is a 400-amino-acid chain: Acetate kinase (400 aa).

Position 10 (asparagine 10) interacts with Mg(2+). Position 17 (lysine 17) interacts with ATP. Arginine 91 serves as a coordination point for substrate. Aspartate 150 serves as the catalytic Proton donor/acceptor. ATP contacts are provided by residues 210 to 214, 285 to 287, and 333 to 337; these read HLGGG, DFR, and GIGEN. Glutamate 387 contributes to the Mg(2+) binding site.

This sequence belongs to the acetokinase family. As to quaternary structure, homodimer. Mg(2+) is required as a cofactor. It depends on Mn(2+) as a cofactor.

The protein resides in the cytoplasm. It carries out the reaction acetate + ATP = acetyl phosphate + ADP. It participates in metabolic intermediate biosynthesis; acetyl-CoA biosynthesis; acetyl-CoA from acetate: step 1/2. Catalyzes the formation of acetyl phosphate from acetate and ATP. Can also catalyze the reverse reaction. This chain is Acetate kinase, found in Buchnera aphidicola subsp. Baizongia pistaciae (strain Bp).